A 351-amino-acid polypeptide reads, in one-letter code: Dysbindin (351 aa).

Ser11 bears the Phosphoserine mark. A coiled-coil region spans residues 88-181; the sequence is EKKKTSLVEL…ELDAEHAQKV (94 aa). Residues 173-331 form a dysbindin region; sequence LDAEHAQKVL…DEEEVQVDTA (159 aa). Residues 243–256 carry the Nuclear export signal motif; it reads LMDISDQEALDVFL. Residues 286-351 form a disordered region; it reads PNPSELRAKP…TPDGGEDSDS (66 aa). Positions 296 to 305 are enriched in polar residues; sequence PSSSSTCTDS. Residues Ser316, Ser321, and Ser349 each carry the phosphoserine modification.

This sequence belongs to the dysbindin family. In terms of assembly, interacts (via its coiled coil domain) with KXD1. Interacts with CMYA5, PI4K2 and RNF151. Component of the biogenesis of lysosome-related organelles complex 1 (BLOC-1) composed of at least BLOC1S1, BLOC1S2, BLOC1S3, BLOC1S4, BLOC1S5, BLOC1S6, DTNBP1/BLOC1S7 and SNAPIN/BLOC1S8. Interacts directly in the complex with BLOC1S5, BLOC1S6 and SNAPIN/BLOC1S8. The BLOC-1 complex associates with the AP-3 protein complex and membrane protein cargos. This BLOC-1 complex also associates with the BLOC-2 complex in endosomes. Binds to DTNA and DTNB but may not be a physiological binding partner. Interacts (isoform 1 and isoform 2 only) with the DNA-dependent protein kinase complex DNA-PK; the interaction phosphorylates DTNBP1 in vitro. Interacts directly in this complex with XRCC5 and XRCC6. Interacts with AP3M1, AP3B2 and TRIM32. Interacts with XPO1; the interaction exports DTNBP1 out of the nucleus. Ubiquitinated by TRIM32. Ubiquitination leads to DTNBP1 degradation. In terms of processing, isoforms 1 and 2 highly phosphorylated by PRKDC in vitro. Isoform 3 only weakly phosphorylated by PRKDC in vitro. Detected in brain, in neurons and in neuropil. Isoform 1 is expressed in the cerebral cortex, and hippocampal frontal (HF). Specific expression in the posterior half of the superior temporal gyrus (pSTG). Higher expression of isoform 2 and 3 in the HF than in the pSTG while isoform 1 shows no difference in expression in these areas. In the HF, detected in dentate gyrus (DG) and in pyramidal cells of hippocampus CA2 and CA3 (at protein level). Expressed in all principal neuronal populations of the HF, namely pyramidal neurons in the subiculum and CA1-3, granule cells in the dense cell layer of the DG (DGg), and polymorph cells in the hilus of the DG (DGh). Maximal levels in CA2, CA3, and DGh. Isoform 2 not expressed in the cerebral cortex.

The protein resides in the cytoplasm. It is found in the cytoplasmic vesicle membrane. Its subcellular location is the endosome membrane. It localises to the melanosome membrane. The protein localises to the postsynaptic density. The protein resides in the endoplasmic reticulum. It is found in the nucleus. Its subcellular location is the cytoplasmic vesicle. It localises to the secretory vesicle. The protein localises to the synaptic vesicle membrane. The protein resides in the postsynaptic cell membrane. Functionally, component of the BLOC-1 complex, a complex that is required for normal biogenesis of lysosome-related organelles (LRO), such as platelet dense granules and melanosomes. In concert with the AP-3 complex, the BLOC-1 complex is required to target membrane protein cargos into vesicles assembled at cell bodies for delivery into neurites and nerve terminals. The BLOC-1 complex, in association with SNARE proteins, is also proposed to be involved in neurite extension. Associates with the BLOC-2 complex to facilitate the transport of TYRP1 independent of AP-3 function. Plays a role in synaptic vesicle trafficking and in neurotransmitter release. Plays a role in the regulation of cell surface exposure of DRD2. May play a role in actin cytoskeleton reorganization and neurite outgrowth. May modulate MAPK8 phosphorylation. Appears to promote neuronal transmission and viability through regulating the expression of SNAP25 and SYN1, modulating PI3-kinase-Akt signaling and influencing glutamatergic release. Regulates the expression of SYN1 through binding to its promoter. Modulates prefrontal cortical activity via the dopamine/D2 pathway. The polypeptide is Dysbindin (DTNBP1) (Homo sapiens (Human)).